Here is a 663-residue protein sequence, read N- to C-terminus: Zinc finger protein 44 (663 aa).

Residues 52–138 form the KRAB domain; it reads VAFEDVAVNF…GETLSQIRNS (87 aa). Residues 189-211 form a C2H2-type 1; atypical zinc finger; it reads YTHKQCGKGLSYRHSFQTCERPH. The segment at 217 to 239 adopts a C2H2-type 2; degenerate zinc-finger fold; it reads YDCKECGKTFSSPGNLRRHMVVK. C2H2-type zinc fingers lie at residues 245–267, 273–295, 301–323, 329–351, 357–379, 385–407, 413–435, 441–463, 469–491, 497–518, 524–546, 552–574, 580–602, 608–630, and 636–658; these read YKCELCGKAFFWPSLLRMHERTH, YECKQCSKAFPVYSSYLRHEKIH, YECKQCSKAFPDYSSYLRHERTH, YKCKQCGKAFSVSGSLRVHERIH, YTCKQCGKAFCHLGSFQRHMIMH, HKCKICGKGFDFPGSARIHEGTH, YECKQCGKLLSHRSSFRRHMMAH, HKCTVCGKAFDSPSVFQRHERTH, YECKQCGKAFRTSSSLRKHETTH, YKCKCGKAFSDLFSFQSHETTH, YECKECGKAFSSFKYFCRHERTH, YECQICGKAFSRFSYLKTHERTH, YECKQCRKAFFWPSFLLRHERTH, YECKHCGKAFSRSSFCREHERTH, and YECKECGKAFSSLSSFNRHKRTH.

The protein belongs to the krueppel C2H2-type zinc-finger protein family.

It localises to the nucleus. Functionally, may be involved in transcriptional regulation. This Homo sapiens (Human) protein is Zinc finger protein 44 (ZNF44).